The sequence spans 152 residues: MSNKFVITWDNMQMYTRQLAEKLLPADQWKGIIAVSRGGLVPAAILARELNIRHVDTVCISSYDHDHQREMKVLKQADGDGEGFIVIDDLVDTGGTAELIRAMYPKAKFVTVCAKPAGKHFIDDYVVDIAQDTWIEQPWDMAVTFVDPISKK.

Residues arginine 37 to glycine 38, arginine 69, and aspartate 88 to threonine 96 contribute to the 5-phospho-alpha-D-ribose 1-diphosphate site. Arginine 69 lines the GMP pocket. Position 89 (aspartate 89) interacts with Mg(2+). Residues aspartate 92 and isoleucine 135 each coordinate guanine. Residues aspartate 92 and isoleucine 135 each contribute to the xanthine site. Residues aspartate 92 to threonine 96 and tryptophan 134 to isoleucine 135 each bind GMP.

It belongs to the purine/pyrimidine phosphoribosyltransferase family. XGPT subfamily. As to quaternary structure, homotetramer. Mg(2+) is required as a cofactor.

It is found in the cell inner membrane. It catalyses the reaction GMP + diphosphate = guanine + 5-phospho-alpha-D-ribose 1-diphosphate. It carries out the reaction XMP + diphosphate = xanthine + 5-phospho-alpha-D-ribose 1-diphosphate. The catalysed reaction is IMP + diphosphate = hypoxanthine + 5-phospho-alpha-D-ribose 1-diphosphate. Its pathway is purine metabolism; GMP biosynthesis via salvage pathway; GMP from guanine: step 1/1. The protein operates within purine metabolism; XMP biosynthesis via salvage pathway; XMP from xanthine: step 1/1. Purine salvage pathway enzyme that catalyzes the transfer of the ribosyl-5-phosphate group from 5-phospho-alpha-D-ribose 1-diphosphate (PRPP) to the N9 position of the 6-oxopurines guanine and xanthine to form the corresponding ribonucleotides GMP (guanosine 5'-monophosphate) and XMP (xanthosine 5'-monophosphate), with the release of PPi. To a lesser extent, also acts on hypoxanthine. The sequence is that of Xanthine-guanine phosphoribosyltransferase from Photobacterium profundum (strain SS9).